The chain runs to 613 residues: Proteasome-associated ATPase (613 aa).

A disordered region spans residues 1-29; the sequence is MSESERSEGFPEGFAGAGSGSLSSEDAAE. The stretch at 23-100 forms a coiled coil; that stretch reads SSEDAAELEA…LREEVDRLGQ (78 aa). 300 to 305 provides a ligand contact to ATP; it reads GCGKTL. Lysine 595 is covalently cross-linked (Isoglutamyl lysine isopeptide (Lys-Gln) (interchain with Q-Cter in protein Pup)). The segment at 612-613 is docks into pockets in the proteasome alpha-ring; the sequence is YL.

This sequence belongs to the AAA ATPase family. As to quaternary structure, homohexamer. Assembles into a hexameric ring structure that caps the 20S proteasome core. Strongly interacts with the prokaryotic ubiquitin-like protein Pup through a hydrophobic interface; the interacting region of ARC lies in its N-terminal coiled-coil domain. There is one Pup binding site per ARC hexamer ring. Upon ATP-binding, the C-terminus of ARC interacts with the alpha-rings of the proteasome core, possibly by binding to the intersubunit pockets.

Its pathway is protein degradation; proteasomal Pup-dependent pathway. Functionally, ATPase which is responsible for recognizing, binding, unfolding and translocation of pupylated proteins into the bacterial 20S proteasome core particle. May be essential for opening the gate of the 20S proteasome via an interaction with its C-terminus, thereby allowing substrate entry and access to the site of proteolysis. Thus, the C-termini of the proteasomal ATPase may function like a 'key in a lock' to induce gate opening and therefore regulate proteolysis. The chain is Proteasome-associated ATPase from Mycolicibacterium smegmatis (strain ATCC 700084 / mc(2)155) (Mycobacterium smegmatis).